A 79-amino-acid polypeptide reads, in one-letter code: Small ribosomal subunit protein bS18 (79 aa).

It belongs to the bacterial ribosomal protein bS18 family. As to quaternary structure, part of the 30S ribosomal subunit. Forms a tight heterodimer with protein bS6.

Functionally, binds as a heterodimer with protein bS6 to the central domain of the 16S rRNA, where it helps stabilize the platform of the 30S subunit. The sequence is that of Small ribosomal subunit protein bS18 from Streptococcus agalactiae serotype Ia (strain ATCC 27591 / A909 / CDC SS700).